Reading from the N-terminus, the 246-residue chain is 1-(5-phosphoribosyl)-5-[(5-phosphoribosylamino)methylideneamino] imidazole-4-carboxamide isomerase (246 aa).

D8 acts as the Proton acceptor in catalysis. The active-site Proton donor is the D131.

The protein belongs to the HisA/HisF family.

It is found in the cytoplasm. It carries out the reaction 1-(5-phospho-beta-D-ribosyl)-5-[(5-phospho-beta-D-ribosylamino)methylideneamino]imidazole-4-carboxamide = 5-[(5-phospho-1-deoxy-D-ribulos-1-ylimino)methylamino]-1-(5-phospho-beta-D-ribosyl)imidazole-4-carboxamide. Its pathway is amino-acid biosynthesis; L-histidine biosynthesis; L-histidine from 5-phospho-alpha-D-ribose 1-diphosphate: step 4/9. The chain is 1-(5-phosphoribosyl)-5-[(5-phosphoribosylamino)methylideneamino] imidazole-4-carboxamide isomerase from Bordetella avium (strain 197N).